The primary structure comprises 336 residues: Urokinase plasminogen activator surface receptor (336 aa).

The first 23 residues, 1 to 23 (MGHPLLLPLLLLLLHTGVPASWG), serve as a signal peptide directing secretion. 3 consecutive UPAR/Ly6 domains span residues 24-111 (LRCM…VTFP), 116-208 (LECI…LSLA), and 215-302 (HRCY…EDIQ). 3 disulfides stabilise this stretch: Cys26-Cys47, Cys29-Cys35, and Cys40-Cys68. Asn75 carries N-linked (GlcNAc...) asparagine glycosylation. 11 disulfides stabilise this stretch: Cys94/Cys99, Cys118/Cys145, Cys121/Cys128, Cys138/Cys170, Cys176/Cys193, Cys194/Cys199, Cys217/Cys245, Cys220/Cys228, Cys238/Cys264, Cys270/Cys288, and Cys289/Cys294. N-linked (GlcNAc...) asparagine glycans are attached at residues Asn195 and Asn223.

In terms of assembly, monomer. Interacts (via the UPAR/Ly6 domains) with SRPX2. Interacts with MRC2. Interacts with FAP (seprase); the interaction occurs at the cell surface of invadopodia membrane. Interacts with SORL1 (via N-terminal ectodomain); this interaction decreases PLAUR internalization. The ternary complex composed of PLAUR-PLAU-SERPINE1 also interacts with SORL1.

The protein localises to the cell membrane. It localises to the cell projection. Its subcellular location is the invadopodium membrane. Acts as a receptor for urokinase plasminogen activator. Plays a role in localizing and promoting plasmin formation. Mediates the proteolysis-independent signal transduction activation effects of U-PA. It is subject to negative-feedback regulation by U-PA which cleaves it into an inactive form. This is Urokinase plasminogen activator surface receptor (PLAUR) from Aotus trivirgatus (Three-striped night monkey).